The chain runs to 409 residues: MQTSFSPATRLGRRALLFPLCLVLFEFAAYIANDMIQPGMLAVVAEFNASVEWVPTSMTAYLAGGMFLQWLLGPLSDRRGRRPVMLAGVAFFVVTCLAILLVNSIEQFIAMRFLQGIGLCFIGAVGYATIQESFEEAVCIKITALMANVALIAPLLGPLAGAALIHVAPWQTMFVLFAVLGAISFAGLWRAMPETASLKGEKLSVANMWRDYKQVLANRRFLCGSLALGFASLPLLAWIAQSPVILISGEQLSTFEYGILQVPIFGALIIGNLTLARLSGKTSIPQLIRYGAGPMIVGLMIAAGSTLYSSHAYLWMTAGLSLYAFGIGLANAGLVRLTLFASDISKGTVSAAMGMISMMIFTLGIELAKVAYLWGDSRGFNLFNLMSGLLWLGLVMVFIRRQPEAVATE.

The Cytoplasmic portion of the chain corresponds to 1-15; that stretch reads MQTSFSPATRLGRRA. A helical transmembrane segment spans residues 16-36; that stretch reads LLFPLCLVLFEFAAYIANDMI. Over 37–52 the chain is Periplasmic; the sequence is QPGMLAVVAEFNASVE. A helical transmembrane segment spans residues 53–73; that stretch reads WVPTSMTAYLAGGMFLQWLLG. The Cytoplasmic segment spans residues 74-82; the sequence is PLSDRRGRR. The helical transmembrane segment at 83-103 threads the bilayer; it reads PVMLAGVAFFVVTCLAILLVN. Over 104–107 the chain is Periplasmic; it reads SIEQ. A helical membrane pass occupies residues 108–128; the sequence is FIAMRFLQGIGLCFIGAVGYA. Residues 129-144 are Cytoplasmic-facing; the sequence is TIQESFEEAVCIKITA. The helical transmembrane segment at 145–165 threads the bilayer; that stretch reads LMANVALIAPLLGPLAGAALI. Residues 166–168 lie on the Periplasmic side of the membrane; sequence HVA. A helical transmembrane segment spans residues 169 to 189; that stretch reads PWQTMFVLFAVLGAISFAGLW. At 190–226 the chain is on the cytoplasmic side; it reads RAMPETASLKGEKLSVANMWRDYKQVLANRRFLCGSL. A helical membrane pass occupies residues 227 to 247; sequence ALGFASLPLLAWIAQSPVILI. Over 248 to 254 the chain is Periplasmic; sequence SGEQLST. The helical transmembrane segment at 255–275 threads the bilayer; sequence FEYGILQVPIFGALIIGNLTL. At 276–286 the chain is on the cytoplasmic side; sequence ARLSGKTSIPQ. The helical transmembrane segment at 287–307 threads the bilayer; it reads LIRYGAGPMIVGLMIAAGSTL. Topologically, residues 308 to 314 are periplasmic; it reads YSSHAYL. The chain crosses the membrane as a helical span at residues 315–335; the sequence is WMTAGLSLYAFGIGLANAGLV. Residues 336–347 are Cytoplasmic-facing; that stretch reads RLTLFASDISKG. A helical membrane pass occupies residues 348–368; it reads TVSAAMGMISMMIFTLGIELA. The Periplasmic portion of the chain corresponds to 369–378; the sequence is KVAYLWGDSR. Residues 379–399 traverse the membrane as a helical segment; it reads GFNLFNLMSGLLWLGLVMVFI. Residues 400 to 409 are Cytoplasmic-facing; it reads RRQPEAVATE.

It belongs to the major facilitator superfamily. MdfA family. As to quaternary structure, monomer.

The protein localises to the cell inner membrane. Functionally, efflux pump driven by the proton motive force. Confers resistance to a broad spectrum of chemically unrelated drugs. In Yersinia pestis (strain D182038), this protein is Multidrug transporter MdfA (mdfA).